We begin with the raw amino-acid sequence, 550 residues long: Homeobox and leucine zipper protein Homez (550 aa).

Over residues 1–10 (MVRGWEPPPG) the composition is skewed to pro residues. The tract at residues 1–36 (MVRGWEPPPGLDCAISEGHKSEGTMPPNKEASGLSS) is disordered. A DNA-binding region (homeobox 1) is located at residues 55–114 (WTQAAQTSELDSNEHLLKTFSYFPYPSLADIALLCLRYGLQMEKVKTWFMAQRLRCGISW). Positions 168 to 199 (GPPTLSKPTQTKGLKVEPEEPSQMPPLPQSHQ) are disordered. Residues lysine 182, lysine 200, and lysine 202 each participate in a glycyl lysine isopeptide (Lys-Gly) (interchain with G-Cter in SUMO2) cross-link. A disordered region spans residues 223–265 (LQSSGLSKEQAGRGPNQSHGIGTASWNHSTTVPQPQARDKPPP). Residues 237 to 256 (PNQSHGIGTASWNHSTTVPQ) show a composition bias toward polar residues. The residue at position 351 (serine 351) is a Phosphoserine. 2 DNA-binding regions (homeobox) span residues 355 to 415 (QRQR…KHGQ) and 451 to 510 (TPPL…AEVV). A Nuclear localization signal motif is present at residues 358–363 (RKTKRK). Disordered regions lie at residues 424 to 465 (VPGA…DIQP) and 512 to 550 (CLDE…IIQD). Threonine 451 bears the Phosphothreonine mark. Positions 452–463 (PPLPIPPPPPDI) are enriched in pro residues. The segment covering 513–550 (LDEEEEEEEEELPEDDEEEEEEEEEDDDDDDDDVIIQD) has biased composition (acidic residues).

In terms of assembly, homodimer or heterodimer (Potential). Interacts with HOXC8. In terms of tissue distribution, ubiquitous. Strongly expressed in adult testis and kidney as well as fetal lung and kidney.

The protein localises to the nucleus. Its function is as follows. May function as a transcriptional regulator. This is Homeobox and leucine zipper protein Homez (HOMEZ) from Homo sapiens (Human).